The chain runs to 254 residues: Phosphoribosylaminoimidazole-succinocarboxamide synthase (254 aa).

It belongs to the SAICAR synthetase family.

It carries out the reaction 5-amino-1-(5-phospho-D-ribosyl)imidazole-4-carboxylate + L-aspartate + ATP = (2S)-2-[5-amino-1-(5-phospho-beta-D-ribosyl)imidazole-4-carboxamido]succinate + ADP + phosphate + 2 H(+). Its pathway is purine metabolism; IMP biosynthesis via de novo pathway; 5-amino-1-(5-phospho-D-ribosyl)imidazole-4-carboxamide from 5-amino-1-(5-phospho-D-ribosyl)imidazole-4-carboxylate: step 1/2. In Gluconobacter oxydans (strain 621H) (Gluconobacter suboxydans), this protein is Phosphoribosylaminoimidazole-succinocarboxamide synthase.